We begin with the raw amino-acid sequence, 123 residues long: Probable histone H2B 3 (123 aa).

Residues 1-31 form a disordered region; that stretch reads MAPPKPSAKGAKKAAKTVSKPKDGKKRKHAR. An O-linked (GlcNAc) serine glycan is attached at Ser110. A Glycyl lysine isopeptide (Lys-Gly) (interchain with G-Cter in ubiquitin) cross-link involves residue Lys118.

This sequence belongs to the histone H2B family. The nucleosome is a histone octamer containing two molecules each of H2A, H2B, H3 and H4 assembled in one H3-H4 heterotetramer and two H2A-H2B heterodimers. The octamer wraps approximately 147 bp of DNA. In terms of processing, monoubiquitination of Lys-118 gives a specific tag for epigenetic transcriptional activation and is also prerequisite for histone H3 'Lys-4' and 'Lys-79' methylation. GlcNAcylation at Ser-110 promotes monoubiquitination of Lys-118. It fluctuates in response to extracellular glucose, and associates with transcribed genes.

The protein localises to the nucleus. It localises to the chromosome. Core component of nucleosome. Nucleosomes wrap and compact DNA into chromatin, limiting DNA accessibility to the cellular machineries which require DNA as a template. Histones thereby play a central role in transcription regulation, DNA repair, DNA replication and chromosomal stability. DNA accessibility is regulated via a complex set of post-translational modifications of histones, also called histone code, and nucleosome remodeling. The polypeptide is Probable histone H2B 3 (his-41) (Caenorhabditis elegans).